The sequence spans 51 residues: Zinc metalloproteinase-disintegrin-like crovidisin (51 aa).

The region spanning 1 to 12 is the Peptidase M12B domain; that stretch reads AMVTKNNGDLDK. Residues 13 to 18 form the Disintegrin domain; the sequence is SGTECR. N-linked (GlcNAc...) asparagine glycosylation occurs at N29.

It belongs to the venom metalloproteinase (M12B) family. P-III subfamily. P-IIIa sub-subfamily. As to quaternary structure, monomer. Zn(2+) serves as cofactor. In terms of tissue distribution, expressed by the venom gland.

The protein localises to the secreted. In terms of biological role, snake venom zinc metalloproteinase-disintegrin-like that blocks the interaction between platelets and collagen fibers through its binding to collagen fibers, resulting in the blockade of collagen-mediated platelet functions such as adhesion, release reaction, thromboxane formation, and aggregation. Binds selectively to collagen type I with high affinity. Also exerts proteolytic activity to matrix. The chain is Zinc metalloproteinase-disintegrin-like crovidisin from Crotalus viridis viridis (Prairie rattlesnake).